The sequence spans 164 residues: Peptidyl-prolyl cis-trans isomerase A (164 aa).

Methionine 1 carries the post-translational modification N-acetylmethionine. Valine 2 is modified (N-acetylvaline; in Peptidyl-prolyl cis-trans isomerase A, N-terminally processed). Residues 7-163 (FFDIAVDGEP…KKITIADCGQ (157 aa)) form the PPIase cyclophilin-type domain. Residue lysine 28 is modified to N6-acetyllysine; alternate. Lysine 28 participates in a covalent cross-link: Glycyl lysine isopeptide (Lys-Gly) (interchain with G-Cter in SUMO2); alternate. A Glycyl lysine isopeptide (Lys-Gly) (interchain with G-Cter in ubiquitin); alternate cross-link involves residue lysine 28. Lysine 44 and lysine 76 each carry N6-acetyllysine. The residue at position 77 (serine 77) is a Phosphoserine. Lysine 82 is modified (N6-acetyllysine; alternate). A Glycyl lysine isopeptide (Lys-Gly) (interchain with G-Cter in SUMO2); alternate cross-link involves residue lysine 82. A Phosphothreonine modification is found at threonine 93. N-linked (GlcNAc...) asparagine glycosylation is present at asparagine 108. Residues lysine 125, lysine 131, and lysine 133 each carry the N6-acetyllysine modification.

The protein belongs to the cyclophilin-type PPIase family. PPIase A subfamily. As to quaternary structure, interacts with protein phosphatase PPP3CA/calcineurin A. Interacts with isoform 2 of BSG/CD147. Interacts with FOXO1; the interaction promotes FOXO1 dephosphorylation, nuclear accumulation and transcriptional activity. Interacts with integrin ITGA2B:ITGB3; the interaction is ROS and peptidyl-prolyl cis-trans isomerase (PPIase) activity-dependent and is increased in the presence of thrombin. Interacts with MAP3K5. Interacts with TARDBP; the interaction is dependent on the RNA-binding activity of TARDBP and the PPIase activity of PPIA/CYPA and the acetylation of PPIA/CYPA at Lys-125 favors the interaction. Interacts with HNRNPA1, HNRNPA2B1, HNRNPC, RBMX, HNRNPK and HNRNPM. Post-translationally, acetylation at Lys-125 markedly inhibits catalysis of cis to trans isomerization. PPIA acetylation also antagonizes the immunosuppressive effects of cyclosporine by inhibiting the sequential steps of cyclosporine binding and calcineurin inhibition. Acetylation at Lys-125 favors the interaction with TARDBP.

Its subcellular location is the cytoplasm. It localises to the secreted. The protein localises to the nucleus. It carries out the reaction [protein]-peptidylproline (omega=180) = [protein]-peptidylproline (omega=0). Binds cyclosporin A (CsA). CsA mediates some of its effects via an inhibitory action on PPIase. In terms of biological role, catalyzes the cis-trans isomerization of proline imidic peptide bonds in oligopeptides. Exerts a strong chemotactic effect on leukocytes partly through activation of one of its membrane receptors BSG/CD147, initiating a signaling cascade that culminates in MAPK/ERK activation. Activates endothelial cells (ECs) in a proinflammatory manner by stimulating activation of NF-kappa-B and ERK, JNK and p38 MAP-kinases and by inducing expression of adhesion molecules including SELE and VCAM1. Induces apoptosis in ECs by promoting the FOXO1-dependent expression of CCL2 and BCL2L11 which are involved in EC chemotaxis and apoptosis. In response to oxidative stress, initiates proapoptotic and antiapoptotic signaling in ECs via activation of NF-kappa-B and AKT1 and up-regulation of antiapoptotic protein BCL2. Negatively regulates MAP3K5/ASK1 kinase activity, autophosphorylation and oxidative stress-induced apoptosis mediated by MAP3K5/ASK1. Necessary for the assembly of TARDBP in heterogeneous nuclear ribonucleoprotein (hnRNP) complexes and regulates TARDBP binding to RNA UG repeats and TARDBP-dependent expression of HDAC6, ATG7 and VCP which are involved in clearance of protein aggregates. Plays an important role in platelet activation and aggregation. Regulates calcium mobilization and integrin ITGA2B:ITGB3 bidirectional signaling via increased ROS production as well as by facilitating the interaction between integrin and the cell cytoskeleton. Binds heparan sulfate glycosaminoglycans. This chain is Peptidyl-prolyl cis-trans isomerase A (PPIA), found in Saguinus oedipus (Cotton-top tamarin).